The following is an 81-amino-acid chain: Acyl carrier protein (81 aa).

The 76-residue stretch at 4–79 folds into the Carrier domain; sequence AEIKDKVYDI…QAIDYIVNKK (76 aa). Position 39 is an O-(pantetheine 4'-phosphoryl)serine (Ser-39).

Belongs to the acyl carrier protein (ACP) family. 4'-phosphopantetheine is transferred from CoA to a specific serine of apo-ACP by AcpS. This modification is essential for activity because fatty acids are bound in thioester linkage to the sulfhydryl of the prosthetic group.

The protein resides in the cytoplasm. Its pathway is lipid metabolism; fatty acid biosynthesis. Carrier of the growing fatty acid chain in fatty acid biosynthesis. In Chlorobaculum tepidum (strain ATCC 49652 / DSM 12025 / NBRC 103806 / TLS) (Chlorobium tepidum), this protein is Acyl carrier protein.